The following is a 655-amino-acid chain: p-hydroxybenzoic acid efflux pump subunit AaeB (655 aa).

The next 11 helical transmembrane spans lie at 13–33 (FAVK…HFQL), 38–58 (WAVL…GGEP), 69–89 (LRII…IAMI), 93–113 (LLMI…SSLV), 121–141 (WGLA…EPLL), 152–172 (EIVI…PRSI), 370–390 (LFWL…IAVV), 407–427 (FIYG…VIIP), 431–451 (QSML…GIEV), 459–479 (MGAL…TFHF), and 482–502 (FLDS…VILL).

This sequence belongs to the aromatic acid exporter ArAE (TC 2.A.85) family.

Its subcellular location is the cell inner membrane. Functionally, forms an efflux pump with AaeA. Could function as a metabolic relief valve, allowing to eliminate certain compounds when they accumulate to high levels in the cell. The polypeptide is p-hydroxybenzoic acid efflux pump subunit AaeB (Escherichia coli O7:K1 (strain IAI39 / ExPEC)).